Reading from the N-terminus, the 348-residue chain is MDEWIAEFIKRIILKLPFSQTMTILKAWGFLTDSELQTLTLRYPKDITATEVVRLCEAKNATIDHAAALDFVFNHAFSNKKLWTVYQMSKTSESENDLFDASEFKLQFKKSIHAVSKNVTINFKEFGEALWIRIAWGTHNTRPNQYKATFAVYHSQTPHVFITGLGKACRPLLCQALVIASKYSQIQEMELKSRCLESLKDIVFKRFNQPFSSHHSRPHEKALTQKIVDPRVTYENMREKERVHHLTRETFGEGPLPKLELASYKLETMFRAESIMGGNLTAGNEPFRCVVKFSSPHLLEAIRSLAPAGIAEAPISTLLSCIPHKARNSFKITEKRGLHPASSQPTNF.

This sequence belongs to the CENP-N/CHL4 family.

It localises to the nucleus. It is found in the chromosome. The protein resides in the centromere. Functionally, probable component of a centromeric complex involved in assembly of kinetochore proteins, mitotic progression and chromosome segregation. In Xenopus tropicalis (Western clawed frog), this protein is Centromere protein N (cenpn).